The sequence spans 136 residues: Small ribosomal subunit protein uS11c (136 aa).

It belongs to the universal ribosomal protein uS11 family. In terms of assembly, part of the 30S ribosomal subunit.

Its subcellular location is the plastid. It is found in the chloroplast. In Helianthus annuus (Common sunflower), this protein is Small ribosomal subunit protein uS11c.